The following is a 477-amino-acid chain: Aspartyl/glutamyl-tRNA(Asn/Gln) amidotransferase subunit B (477 aa).

Belongs to the GatB/GatE family. GatB subfamily. In terms of assembly, heterotrimer of A, B and C subunits.

It carries out the reaction L-glutamyl-tRNA(Gln) + L-glutamine + ATP + H2O = L-glutaminyl-tRNA(Gln) + L-glutamate + ADP + phosphate + H(+). The catalysed reaction is L-aspartyl-tRNA(Asn) + L-glutamine + ATP + H2O = L-asparaginyl-tRNA(Asn) + L-glutamate + ADP + phosphate + 2 H(+). Functionally, allows the formation of correctly charged Asn-tRNA(Asn) or Gln-tRNA(Gln) through the transamidation of misacylated Asp-tRNA(Asn) or Glu-tRNA(Gln) in organisms which lack either or both of asparaginyl-tRNA or glutaminyl-tRNA synthetases. The reaction takes place in the presence of glutamine and ATP through an activated phospho-Asp-tRNA(Asn) or phospho-Glu-tRNA(Gln). In Ligilactobacillus salivarius (strain UCC118) (Lactobacillus salivarius), this protein is Aspartyl/glutamyl-tRNA(Asn/Gln) amidotransferase subunit B.